The following is an 86-amino-acid chain: MVSRGCSITVLFRFLIVLLVIQVHFENTKAARHAPVVSWSPPEPPKDDFVWYHKINRFKNIEQDAFRPTHQGPSQGIGHKNPPGAP.

The N-terminal stretch at 1–30 is a signal peptide; sequence MVSRGCSITVLFRFLIVLLVIQVHFENTKA. The propeptide occupies 31–64; the sequence is ARHAPVVSWSPPEPPKDDFVWYHKINRFKNIEQD. A disordered region spans residues 63–86; the sequence is QDAFRPTHQGPSQGIGHKNPPGAP. 2 positions are modified to hydroxyproline: P68 and P73. The propeptide occupies 80 to 86; that stretch reads KNPPGAP.

The protein belongs to the C-terminally encoded plant signaling peptide (CEP) family. As to quaternary structure, interacts with CEP receptors (e.g. CEPR1 and CEPR2). In terms of processing, the mature small signaling peptide is generated by proteolytic processing of the longer precursor. In terms of tissue distribution, expressed at low levels in flowers. Present in lateral roots, shoot apical meristem (SAM), flowers and siliques.

It is found in the secreted. The protein localises to the extracellular space. Its subcellular location is the apoplast. Its function is as follows. Extracellular signaling peptide that represses primary root growth rate. Promotes shoot growth and modulates leaf morphology. Regulates systemic nitrogen (N)-demand signaling. Mediates up-regulation of genes involved in N uptake and assimilation pathways. In Arabidopsis thaliana (Mouse-ear cress), this protein is Precursor of CEP4.